The chain runs to 97 residues: Nucleoid-associated protein Hac_0048 (97 aa).

It belongs to the YbaB/EbfC family. Homodimer.

It localises to the cytoplasm. The protein resides in the nucleoid. In terms of biological role, binds to DNA and alters its conformation. May be involved in regulation of gene expression, nucleoid organization and DNA protection. The sequence is that of Nucleoid-associated protein Hac_0048 from Helicobacter acinonychis (strain Sheeba).